Consider the following 639-residue polypeptide: Chaperone protein DnaK 1 (639 aa).

Residue Thr199 is modified to Phosphothreonine; by autocatalysis. The span at 603-612 shows a compositional bias: low complexity; that stretch reads QQQAQAQQAP. Residues 603 to 639 form a disordered region; it reads QQQAQAQQAPGGEGEQEAKQDDNVVDAEFEEVKDEKK. The span at 625-639 shows a compositional bias: acidic residues; that stretch reads NVVDAEFEEVKDEKK.

The protein belongs to the heat shock protein 70 family.

Functionally, acts as a chaperone. The protein is Chaperone protein DnaK 1 of Photobacterium profundum (strain SS9).